A 966-amino-acid chain; its full sequence is Alanine--tRNA ligase, cytoplasmic (966 aa).

Residues H604, H608, C723, and H727 each contribute to the Zn(2+) site.

The protein belongs to the class-II aminoacyl-tRNA synthetase family. In terms of assembly, monomer. Zn(2+) serves as cofactor.

The protein resides in the cytoplasm. The enzyme catalyses tRNA(Ala) + L-alanine + ATP = L-alanyl-tRNA(Ala) + AMP + diphosphate. Functionally, catalyzes the attachment of alanine to tRNA(Ala) in a two-step reaction: alanine is first activated by ATP to form Ala-AMP and then transferred to the acceptor end of tRNA(Ala). Also edits incorrectly charged tRNA(Ala) via its editing domain. The sequence is that of Alanine--tRNA ligase, cytoplasmic from Drosophila melanogaster (Fruit fly).